We begin with the raw amino-acid sequence, 277 residues long: Glycerol-3-phosphate acyltransferase (277 aa).

5 helical membrane-spanning segments follow: residues 3 to 23 (LFIFLILVGYLMGSINSAIIV), 55 to 75 (IMVMVFDALKGILPVILAKLL), 79 to 99 (PVTVAFTALAAVVGHMYPVFF), 111 to 131 (IGALLAFHFVIGVMVAATWLL), and 155 to 175 (LILVGNLNIFPPLFMITILVL). The tract at residues 207 to 277 (SPATSAEQEF…PKTKTVKEKE (71 aa)) is disordered. Residues 216–239 (FPGKEVIDTNIDETEKTEQAEAVK) are compositionally biased toward basic and acidic residues. Basic residues-rich tracts occupy residues 240-253 (KPKVKKATTKAKKT) and 262-271 (KPKSTKPKTK).

The protein belongs to the PlsY family. As to quaternary structure, probably interacts with PlsX.

It localises to the cell inner membrane. The enzyme catalyses an acyl phosphate + sn-glycerol 3-phosphate = a 1-acyl-sn-glycero-3-phosphate + phosphate. It functions in the pathway lipid metabolism; phospholipid metabolism. Functionally, catalyzes the transfer of an acyl group from acyl-phosphate (acyl-PO(4)) to glycerol-3-phosphate (G3P) to form lysophosphatidic acid (LPA). This enzyme utilizes acyl-phosphate as fatty acyl donor, but not acyl-CoA or acyl-ACP. This is Glycerol-3-phosphate acyltransferase from Legionella pneumophila (strain Corby).